A 668-amino-acid polypeptide reads, in one-letter code: MAP kinase kinase PBS2 (668 aa).

The segment covering 1–15 (MEDKFANLSLHEKTG) has biased composition (basic and acidic residues). Disordered regions lie at residues 1 to 43 (MEDK…SSHY), 61 to 120 (RALK…ASSK), and 181 to 313 (NPNR…GSSG). 3 stretches are compositionally biased toward polar residues: residues 16 to 43 (KSSI…SSHY), 68 to 91 (SVGS…QQIV), and 104 to 120 (SKVS…ASSK). A Phosphoserine modification is found at serine 68. A compositionally biased stretch (low complexity) spans 239–250 (AQQPQQFAPSPS). Position 269 is a phosphoserine (serine 269). A compositionally biased stretch (polar residues) spans 270–300 (NPGSLINGVQSTSTSSSTEGPHDTVGTTPRT). Over residues 301–310 (GNSNNSSNSG) the composition is skewed to low complexity. The region spanning 360–623 (LEFLDELGHG…YAALTEHPWL (264 aa)) is the Protein kinase domain. Residues 366–374 (LGHGNYGNV) and lysine 389 each bind ATP. Aspartate 485 acts as the Proton acceptor in catalysis. Residue serine 514 is modified to Phosphoserine. Threonine 518 carries the post-translational modification Phosphothreonine.

This sequence belongs to the protein kinase superfamily. STE Ser/Thr protein kinase family. MAP kinase kinase subfamily. As to quaternary structure, interacts with NBP2, PTC1, SHO1 and STE11. In terms of processing, activated by phosphorylation by SSK2 or SSK22. Ser/Thr phosphorylation is also necessary for SHO1-mediated activation.

Its subcellular location is the cytoplasm. It carries out the reaction L-seryl-[protein] + ATP = O-phospho-L-seryl-[protein] + ADP + H(+). The catalysed reaction is L-threonyl-[protein] + ATP = O-phospho-L-threonyl-[protein] + ADP + H(+). It catalyses the reaction L-tyrosyl-[protein] + ATP = O-phospho-L-tyrosyl-[protein] + ADP + H(+). In terms of biological role, kinase involved in a signal transduction pathway that is activated by changes in the osmolarity of the extracellular environment. Activates the MAP kinase HOG1 by concomitant phosphorylation at 'Thr-174' and 'Tyr-176'. This Saccharomyces cerevisiae (strain ATCC 204508 / S288c) (Baker's yeast) protein is MAP kinase kinase PBS2 (PBS2).